The primary structure comprises 3086 residues: Genome polyprotein (3086 aa).

The 135-residue stretch at 122–256 folds into the Peptidase S30 domain; it reads RRSKILACDL…RAGIHTIKHY (135 aa). Active-site for P1 proteinase activity residues include His-173, Asp-182, and Ser-215. Residues 590–711 form the Peptidase C6 domain; sequence YYVAPEGYCY…TGEMLDYNVG (122 aa). Active-site for helper component proteinase activity residues include Cys-598 and His-670. The 153-residue stretch at 1189-1341 folds into the Helicase ATP-binding domain; sequence ISSDTANAEF…PMFPVRVSEA (153 aa). 1202–1209 contacts ATP; it reads GGVGTGKS. A DEAH box motif is present at residues 1291 to 1294; the sequence is DECH. Tyr-1870 is subject to O-(5'-phospho-RNA)-tyrosine. The interval 1970-1990 is disordered; the sequence is HDGELRQSRPSRPIQKDQVPA. A Peptidase C4 domain is found at 2000 to 2217; it reads SKSIAKGLRD…VNYGTMDLTS (218 aa). Active-site for nuclear inclusion protein A activity residues include His-2045, Asp-2080, and Cys-2149. A RdRp catalytic domain is found at 2482–2606; sequence WDYFDADGSR…AVEPSLSDKI (125 aa). Residues 2762-2821 are compositionally biased toward low complexity; it reads TAASSAATQTSTTSPTVTSTSGASTSTSSGTTSAPLASTTPPVSATTTPSTGTTAPTTPT. The interval 2762–2822 is disordered; the sequence is TAASSAATQT…GTTAPTTPTV (61 aa). Thr-3069 carries the post-translational modification Phosphothreonine.

Belongs to the potyviridae genome polyprotein family. In terms of processing, VPg is uridylylated by the polymerase and is covalently attached to the 5'-end of the genomic RNA. This uridylylated form acts as a nucleotide-peptide primer for the polymerase. Post-translationally, genome polyprotein of potyviruses undergoes post-translational proteolytic processing by the main proteinase NIa-pro resulting in the production of at least ten individual proteins. The P1 proteinase and the HC-pro cleave only their respective C-termini autocatalytically. 6K1 is essential for proper proteolytic separation of P3 from CI.

The protein localises to the host cytoplasmic vesicle membrane. The protein resides in the host cytoplasmic vesicle. It is found in the virion. It carries out the reaction RNA(n) + a ribonucleoside 5'-triphosphate = RNA(n+1) + diphosphate. The enzyme catalyses Hydrolyzes glutaminyl bonds, and activity is further restricted by preferences for the amino acids in P6 - P1' that vary with the species of potyvirus, e.g. Glu-Xaa-Xaa-Tyr-Xaa-Gln-|-(Ser or Gly) for the enzyme from tobacco etch virus. The natural substrate is the viral polyprotein, but other proteins and oligopeptides containing the appropriate consensus sequence are also cleaved.. It catalyses the reaction Hydrolyzes a Gly-|-Gly bond at its own C-terminus, commonly in the sequence -Tyr-Xaa-Val-Gly-|-Gly, in the processing of the potyviral polyprotein.. In terms of biological role, required for aphid transmission and also has proteolytic activity. Only cleaves a Gly-Gly dipeptide at its own C-terminus. Interacts with virions and aphid stylets. Acts as a suppressor of RNA-mediated gene silencing, also known as post-transcriptional gene silencing (PTGS), a mechanism of plant viral defense that limits the accumulation of viral RNAs. May have RNA-binding activity. Its function is as follows. Has helicase activity. It may be involved in replication. Indispensable for virus replication. Reduces the abundance of host transcripts related to jasmonic acid biosynthesis therefore altering the host defenses. In order to increase its own stability, decreases host protein degradation pathways. Functionally, indispensable for virus replication. In terms of biological role, mediates the cap-independent, EIF4E-dependent translation of viral genomic RNAs. Binds to the cap-binding site of host EIF4E and thus interferes with the host EIF4E-dependent mRNA export and translation. VPg-RNA directly binds EIF4E and is a template for transcription. Also forms trimeric complexes with EIF4E-EIF4G, which are templates for translation. Its function is as follows. Has RNA-binding and proteolytic activities. An RNA-dependent RNA polymerase that plays an essential role in the virus replication. Functionally, involved in aphid transmission, cell-to-cell and systemis movement, encapsidation of the viral RNA and in the regulation of viral RNA amplification. This chain is Genome polyprotein, found in Dactylis glomerata (Orchard grass).